A 122-amino-acid chain; its full sequence is MSAEYGQRQQPGGRGGRSSGNKKSKKRCRRKESYSMYIYKVLKQVHPDIGISAKAMSIMNSFVNDVFEQLACEAARLAQYSGRTTLTSREVQTAVRLLLPGELAKHAVSEGTKAVTKYTSSK.

The interval 1 to 30 is disordered; the sequence is MSAEYGQRQQPGGRGGRSSGNKKSKKRCRR. Over residues 20–30 the composition is skewed to basic residues; it reads GNKKSKKRCRR. Position 31 is an N6-(2-hydroxyisobutyryl)lysine; alternate (lysine 31). At lysine 31 the chain carries N6-(beta-hydroxybutyryl)lysine; alternate. Position 31 is an N6-crotonyllysine; alternate (lysine 31). Lysine 31 carries the N6-glutaryllysine; alternate modification. At lysine 31 the chain carries N6-succinyllysine; alternate. Lysine 31 participates in a covalent cross-link: Glycyl lysine isopeptide (Lys-Gly) (interchain with G-Cter in ubiquitin); alternate. Serine 33 bears the Phosphoserine mark. N6-(2-hydroxyisobutyryl)lysine; alternate is present on residues lysine 40, lysine 43, and lysine 54. N6-glutaryllysine; alternate is present on residues lysine 40 and lysine 43. Lysine 40 carries the post-translational modification N6-lactoyllysine; alternate. Lysine 43 is modified (N6-methyllysine). Lysine 43 is modified (N6-methyllysine; alternate). Lysine 54 carries the post-translational modification N6,N6-dimethyllysine. The residue at position 54 (lysine 54) is an N6,N6-dimethyllysine; alternate. Arginine 76 is subject to Dimethylated arginine. Serine 81 is modified (phosphoserine). An omega-N-methylarginine mark is found at arginine 83 and arginine 89. Lysine 105 bears the N6-(2-hydroxyisobutyryl)lysine; alternate mark. Residue lysine 105 is modified to N6-glutaryllysine; alternate. Position 105 is an N6-lactoyllysine; alternate (lysine 105). At lysine 105 the chain carries N6-methyllysine. At lysine 105 the chain carries N6-methyllysine; alternate. A glycan (O-linked (GlcNAc) serine) is linked at serine 109. Threonine 112 bears the Phosphothreonine mark. Residues lysine 113 and lysine 117 each carry the N6-(2-hydroxyisobutyryl)lysine; alternate modification. Residues lysine 113 and lysine 117 each carry the N6-(beta-hydroxybutyryl)lysine; alternate modification. Lysine 113 and lysine 117 each carry N6-glutaryllysine; alternate. Residues lysine 113 and lysine 117 each carry the N6-succinyllysine; alternate modification. Lysine 113 is modified (N6-lactoyllysine; alternate). Lysine 113 is subject to N6-malonyllysine; alternate. An N6-methylated lysine; alternate modification is found at lysine 113. Lysine 117 is covalently cross-linked (Glycyl lysine isopeptide (Lys-Gly) (interchain with G-Cter in ubiquitin); alternate).

This sequence belongs to the histone H2B family. As to quaternary structure, the nucleosome is a histone octamer containing two molecules each of H2A, H2B, H3 and H4 assembled in one H3-H4 heterotetramer and two H2A-H2B heterodimers. The octamer wraps approximately 147 bp of DNA.

It localises to the chromosome. It is found in the nucleus. Core component of nucleosome. Nucleosomes wrap and compact DNA into chromatin, limiting DNA accessibility to the cellular machineries which require DNA as a template. Histones thereby play a central role in transcription regulation, DNA repair, DNA replication and chromosomal stability. DNA accessibility is regulated via a complex set of post-translational modifications of histones, also called histone code, and nucleosome remodeling. The chain is Histone H2B type 2-K1 from Homo sapiens (Human).